Reading from the N-terminus, the 336-residue chain is MPISTINDSISESSVHKSSIPTKVEMSQNEKYSEAPSEAPTIPPPPEQYAWSRIRENCQDAFSEFFGTFVLLLFGDGVVAQVVLSRGTKGDYQSISWGWGLGVMLGVYVGGKSGGHLNPAVTLANCLFRGHPWRKFPIYAVAQVLGAMAAAAVVYGNYKSAIDAYEGGPGIRTVIGENATAGVFCTYPAEFMTRTGMFFSEFIASTILQFVIFAMADSANIGAGPLMPLGLFFLIFGIGACFGWETGYAINLARDFGPRLVSYMLGYGSEVWSAGGYYFWIPMVAPFFGCAFGGFLYDVFIYTGPSPINTPGMGFGRLVSPRRSTWSNTYNANSPV.

A disordered region spans residues 1-46 (MPISTINDSISESSVHKSSIPTKVEMSQNEKYSEAPSEAPTIPPPP). The Cytoplasmic segment spans residues 1-64 (MPISTINDSI…RENCQDAFSE (64 aa)). Over residues 9-19 (SISESSVHKSS) the composition is skewed to low complexity. A helical transmembrane segment spans residues 65-85 (FFGTFVLLLFGDGVVAQVVLS). Over 86-94 (RGTKGDYQS) the chain is Extracellular. A helical membrane pass occupies residues 95–115 (ISWGWGLGVMLGVYVGGKSGG). The Cytoplasmic portion of the chain corresponds to 116-135 (HLNPAVTLANCLFRGHPWRK). The NPA 1 motif lies at 118–120 (NPA). A helical membrane pass occupies residues 136-156 (FPIYAVAQVLGAMAAAAVVYG). Residues 157 to 195 (NYKSAIDAYEGGPGIRTVIGENATAGVFCTYPAEFMTRT) are Extracellular-facing. Asn178 carries an N-linked (GlcNAc...) asparagine glycan. Residues 196–216 (GMFFSEFIASTILQFVIFAMA) form a helical membrane-spanning segment. The Cytoplasmic segment spans residues 217-223 (DSANIGA). Residues 224–244 (GPLMPLGLFFLIFGIGACFGW) form a helical membrane-spanning segment. The Extracellular portion of the chain corresponds to 245–280 (ETGYAINLARDFGPRLVSYMLGYGSEVWSAGGYYFW). Positions 251 to 253 (NLA) match the NPA 2 motif. Residues 281 to 301 (IPMVAPFFGCAFGGFLYDVFI) traverse the membrane as a helical segment. The Cytoplasmic portion of the chain corresponds to 302-336 (YTGPSPINTPGMGFGRLVSPRRSTWSNTYNANSPV).

Belongs to the MIP/aquaporin (TC 1.A.8) family.

It localises to the membrane. The enzyme catalyses H2O(in) = H2O(out). The catalysed reaction is glycerol(in) = glycerol(out). Functionally, probable water/glycerol channel that may have redundant functions with FgAQP4. This chain is Probable aquaglyceroporin-2, found in Gibberella zeae (strain ATCC MYA-4620 / CBS 123657 / FGSC 9075 / NRRL 31084 / PH-1) (Wheat head blight fungus).